The primary structure comprises 393 residues: Elongation factor Tu (393 aa).

The tr-type G domain maps to 6–204; it reads KPHINVGTIG…ALEKIELPVR (199 aa). A G1 region spans residues 15-22; that stretch reads GHVDHGKT. GTP is bound at residue 15 to 22; that stretch reads GHVDHGKT. Residue threonine 22 participates in Mg(2+) binding. Residues 58–62 form a G2 region; sequence GITIS. Residues 79-82 are G3; the sequence is DCPG. GTP contacts are provided by residues 79 to 83 and 134 to 137; these read DCPGH and NKCD. Residues 134-137 are G4; it reads NKCD. A G5 region spans residues 172-174; sequence SAV.

The protein belongs to the TRAFAC class translation factor GTPase superfamily. Classic translation factor GTPase family. EF-Tu/EF-1A subfamily. In terms of assembly, monomer.

The protein resides in the cytoplasm. It catalyses the reaction GTP + H2O = GDP + phosphate + H(+). Its function is as follows. GTP hydrolase that promotes the GTP-dependent binding of aminoacyl-tRNA to the A-site of ribosomes during protein biosynthesis. In Anaplasma marginale (strain St. Maries), this protein is Elongation factor Tu.